We begin with the raw amino-acid sequence, 412 residues long: Alpha-ketoglutarate-dependent sulfonate dioxygenase (412 aa).

At S52 the chain carries Phosphoserine. The Fe cation site is built by H218 and D220. 2-oxoglutarate contacts are provided by T245 and W352. H367 is a Fe cation binding site. R379 and R383 together coordinate 2-oxoglutarate.

It belongs to the TfdA dioxygenase family. Fe(2+) is required as a cofactor.

It participates in organosulfur degradation; alkanesulfonate degradation. Acts as an alpha-ketoglutarate-dependent dioxygenase active on sulfonates. Although taurine is a poor substrate, a variety of other sulfonates are utilized, with the best natural substrates being isethionate and taurocholate. This chain is Alpha-ketoglutarate-dependent sulfonate dioxygenase (JLP1), found in Saccharomyces cerevisiae (strain ATCC 204508 / S288c) (Baker's yeast).